Here is a 307-residue protein sequence, read N- to C-terminus: D-alanine--D-alanine ligase (307 aa).

The ATP-grasp domain occupies 101 to 301 (KTVMRAAGVS…FGELVRWMVE (201 aa)). Residue 127-182 (PLTPPYVVKPIAEGSSMGVIIVRDERSHPPQILASDEWVYGEEVLAETYVAGRELT) participates in ATP binding. 3 residues coordinate Mg(2+): Asp-251, Glu-268, and Asn-270.

Belongs to the D-alanine--D-alanine ligase family. Mg(2+) is required as a cofactor. It depends on Mn(2+) as a cofactor.

The protein resides in the cytoplasm. It catalyses the reaction 2 D-alanine + ATP = D-alanyl-D-alanine + ADP + phosphate + H(+). The protein operates within cell wall biogenesis; peptidoglycan biosynthesis. Cell wall formation. This chain is D-alanine--D-alanine ligase, found in Methylorubrum extorquens (strain CM4 / NCIMB 13688) (Methylobacterium extorquens).